A 731-amino-acid polypeptide reads, in one-letter code: DNA ligase (731 aa).

NAD(+)-binding positions include 59–63 (DSEYD), 108–109 (SL), and glutamate 142. The N6-AMP-lysine intermediate role is filled by lysine 144. Arginine 165, glutamate 202, lysine 318, and lysine 342 together coordinate NAD(+). Residues cysteine 434, cysteine 437, cysteine 452, and cysteine 458 each coordinate Zn(2+). Residues 645–731 (LASSPLSGKI…ENDGQDSIKI (87 aa)) form the BRCT domain.

The protein belongs to the NAD-dependent DNA ligase family. LigA subfamily. Mg(2+) serves as cofactor. Requires Mn(2+) as cofactor.

It carries out the reaction NAD(+) + (deoxyribonucleotide)n-3'-hydroxyl + 5'-phospho-(deoxyribonucleotide)m = (deoxyribonucleotide)n+m + AMP + beta-nicotinamide D-nucleotide.. Its function is as follows. DNA ligase that catalyzes the formation of phosphodiester linkages between 5'-phosphoryl and 3'-hydroxyl groups in double-stranded DNA using NAD as a coenzyme and as the energy source for the reaction. It is essential for DNA replication and repair of damaged DNA. The chain is DNA ligase from Zymomonas mobilis subsp. mobilis (strain ATCC 31821 / ZM4 / CP4).